We begin with the raw amino-acid sequence, 51 residues long: Large ribosomal subunit protein bL33 (51 aa).

Positions Met-1–Lys-23 are disordered. Residues Ser-10–Thr-20 show a composition bias toward polar residues.

This sequence belongs to the bacterial ribosomal protein bL33 family.

This chain is Large ribosomal subunit protein bL33, found in Methylobacillus flagellatus (strain ATCC 51484 / DSM 6875 / VKM B-1610 / KT).